Consider the following 207-residue polypeptide: 2,3-bisphosphoglycerate-dependent phosphoglycerate mutase (207 aa).

Substrate is bound by residues 10–17 (RHGQSEWN), 23–24 (TG), R62, 89–92 (ERDY), K100, 116–117 (RR), and 160–161 (GN). H11 functions as the Tele-phosphohistidine intermediate in the catalytic mechanism. E89 acts as the Proton donor/acceptor in catalysis.

It belongs to the phosphoglycerate mutase family. BPG-dependent PGAM subfamily. In terms of assembly, homodimer.

It carries out the reaction (2R)-2-phosphoglycerate = (2R)-3-phosphoglycerate. The protein operates within carbohydrate degradation; glycolysis; pyruvate from D-glyceraldehyde 3-phosphate: step 3/5. Catalyzes the interconversion of 2-phosphoglycerate and 3-phosphoglycerate. The sequence is that of 2,3-bisphosphoglycerate-dependent phosphoglycerate mutase from Nitrobacter hamburgensis (strain DSM 10229 / NCIMB 13809 / X14).